A 132-amino-acid polypeptide reads, in one-letter code: Small ribosomal subunit protein uS9 (132 aa).

Belongs to the universal ribosomal protein uS9 family.

This is Small ribosomal subunit protein uS9 from Methanothrix thermoacetophila (strain DSM 6194 / JCM 14653 / NBRC 101360 / PT) (Methanosaeta thermophila).